The following is a 695-amino-acid chain: Probable pre-mRNA-splicing factor ATP-dependent RNA helicase DEAH9 (695 aa).

Residues Leu58 to Pro223 enclose the Helicase ATP-binding domain. Gly71–Thr78 is an ATP binding site. The DEAH box signature appears at Asp170–His173. A Helicase C-terminal domain is found at Ser261–Gly438.

It belongs to the DEAD box helicase family. DEAH subfamily. DDX35 sub-subfamily.

It carries out the reaction ATP + H2O = ADP + phosphate + H(+). Functionally, may be involved in pre-mRNA splicing. In Arabidopsis thaliana (Mouse-ear cress), this protein is Probable pre-mRNA-splicing factor ATP-dependent RNA helicase DEAH9.